A 194-amino-acid polypeptide reads, in one-letter code: FK506-binding protein 3 (194 aa).

The signal sequence occupies residues 1 to 19; that stretch reads MNKFLIALLVLATLAVSFS. Residues 44 to 133 enclose the PPIase FKBP-type domain; the sequence is GDYISLKYVG…YFDLEVVSIE (90 aa). The helical transmembrane segment at 148–168 threads the bilayer; it reads VGTIIAFSMLAGFIVLVKFII. The tract at residues 173–194 is disordered; the sequence is DESNSKKPAPGKPKKTKAAKQN. Over residues 184–194 the composition is skewed to basic residues; it reads KPKKTKAAKQN.

This sequence belongs to the FKBP-type PPIase family.

The protein resides in the membrane. The catalysed reaction is [protein]-peptidylproline (omega=180) = [protein]-peptidylproline (omega=0). With respect to regulation, inhibited by both FK506 and rapamycin. PPIases accelerate the folding of proteins by catalyzing the cis-trans isomerization of proline imidic peptide bonds in oligopeptides. The chain is FK506-binding protein 3 (fkbp3) from Dictyostelium discoideum (Social amoeba).